Consider the following 98-residue polypeptide: MSMVYINIFLAFIMSLMGLLMYRSHLMSSLLCLEGMMLSLFIMMTMVVLNNHFTLASMTPIILLVFAACEAALGLSLLVMVSNTYGTDYVQNLNLLQC.

Transmembrane regions (helical) follow at residues 1–21, 29–49, and 61–81; these read MSMV…GLLM, SLLC…MVVL, and IILL…LVMV.

Belongs to the complex I subunit 4L family. As to quaternary structure, core subunit of respiratory chain NADH dehydrogenase (Complex I) which is composed of 45 different subunits.

The protein localises to the mitochondrion inner membrane. The enzyme catalyses a ubiquinone + NADH + 5 H(+)(in) = a ubiquinol + NAD(+) + 4 H(+)(out). Functionally, core subunit of the mitochondrial membrane respiratory chain NADH dehydrogenase (Complex I) which catalyzes electron transfer from NADH through the respiratory chain, using ubiquinone as an electron acceptor. Part of the enzyme membrane arm which is embedded in the lipid bilayer and involved in proton translocation. The chain is NADH-ubiquinone oxidoreductase chain 4L (MT-ND4L) from Acinonyx jubatus (Cheetah).